The primary structure comprises 84 residues: MAITMRTLVAFVFTIFFIISFVHSRTTTSGYGMLFDSVACEGGFEYCPRGGGNDKCTTFCRSLPNKYDFGVCDKIYACCCHINV.

The N-terminal stretch at 1–24 is a signal peptide; the sequence is MAITMRTLVAFVFTIFFIISFVHS. 4 cysteine pairs are disulfide-bonded: Cys40-Cys80, Cys47-Cys72, Cys56-Cys78, and Cys60-Cys79.

Belongs to the DEFL family.

Its subcellular location is the secreted. The protein is Defensin-like protein 199 of Arabidopsis thaliana (Mouse-ear cress).